The sequence spans 148 residues: Deoxyuridine 5'-triphosphate nucleotidohydrolase (148 aa).

Residues 67–69, Asn-80, 84–86, and Met-94 contribute to the substrate site; these read RSG and LID.

This sequence belongs to the dUTPase family. Requires Mg(2+) as cofactor.

The catalysed reaction is dUTP + H2O = dUMP + diphosphate + H(+). Its pathway is pyrimidine metabolism; dUMP biosynthesis; dUMP from dCTP (dUTP route): step 2/2. In terms of biological role, this enzyme is involved in nucleotide metabolism: it produces dUMP, the immediate precursor of thymidine nucleotides and it decreases the intracellular concentration of dUTP so that uracil cannot be incorporated into DNA. This chain is Deoxyuridine 5'-triphosphate nucleotidohydrolase, found in Ralstonia pickettii (strain 12J).